Consider the following 79-residue polypeptide: Pigment-dispersing hormone type 1 (79 aa).

Positions 1-22 (MRSAVVVALLVMVAMSLQLTAA) are cleaved as a signal peptide. The residue at position 76 (A76) is an Alanine amide.

It belongs to the arthropod PDH family. Eyestalk.

Its subcellular location is the secreted. The pigment-dispersing hormone causes the migration of the distal retinal pigment into the proximal end of the pigment chromatophore cells and thus decreases the amount of light entering the retinulas. May also function as a neurotransmitter and/or neuromodulator. This Penaeus vannamei (Whiteleg shrimp) protein is Pigment-dispersing hormone type 1 (PDH1).